A 446-amino-acid polypeptide reads, in one-letter code: Gamma-glutamyl phosphate reductase (446 aa).

This sequence belongs to the gamma-glutamyl phosphate reductase family.

The protein localises to the cytoplasm. It catalyses the reaction L-glutamate 5-semialdehyde + phosphate + NADP(+) = L-glutamyl 5-phosphate + NADPH + H(+). It functions in the pathway amino-acid biosynthesis; L-proline biosynthesis; L-glutamate 5-semialdehyde from L-glutamate: step 2/2. Its function is as follows. Catalyzes the NADPH-dependent reduction of L-glutamate 5-phosphate into L-glutamate 5-semialdehyde and phosphate. The product spontaneously undergoes cyclization to form 1-pyrroline-5-carboxylate. This Sulfurihydrogenibium sp. (strain YO3AOP1) protein is Gamma-glutamyl phosphate reductase.